We begin with the raw amino-acid sequence, 218 residues long: Embryonic polyadenylate-binding protein 2-A (218 aa).

A compositionally biased stretch (basic and acidic residues) spans Met1–Gly16. Disordered regions lie at residues Met1–Glu26 and Arg169–Tyr218. One can recognise an RRM domain in the interval Arg93–Thr170. The span at Phe205–Tyr218 shows a compositional bias: low complexity.

It localises to the cytoplasm. Functionally, binds the poly(A) tail of mRNA. Unable to interact with the cap-binding complex and is therefore unlikely to be involved in translation initiation. The sequence is that of Embryonic polyadenylate-binding protein 2-A (Pabpn1l-a) from Xenopus laevis (African clawed frog).